The chain runs to 320 residues: Dipeptide transport system permease protein DppC (320 aa).

Transmembrane regions (helical) follow at residues 56-76, 121-141, 154-176, 230-252, 267-287, and 289-309; these read LAMA…IGPF, LFVG…YGGV, MRII…MVLM, LLPN…AIFA, FASW…GHWW, and LFFP…LGDG. Positions 117 to 307 constitute an ABC transmembrane type-1 domain; it reads ARISLFVGVM…LTMYAFNVLG (191 aa).

This sequence belongs to the binding-protein-dependent transport system permease family. OppBC subfamily.

The protein resides in the cell membrane. Functionally, probably part of the ABC transporter DppBCDE involved in dipeptide transport. Responsible for the translocation of the substrate across the membrane. The chain is Dipeptide transport system permease protein DppC (dppC) from Bacillus subtilis (strain 168).